Here is a 300-residue protein sequence, read N- to C-terminus: Lipoyl synthase 2 (300 aa).

Residues C46, C51, C57, C72, C76, C79, and S294 each coordinate [4Fe-4S] cluster. One can recognise a Radical SAM core domain in the interval Y58–S283.

It belongs to the radical SAM superfamily. Lipoyl synthase family. The cofactor is [4Fe-4S] cluster.

The protein resides in the cytoplasm. It catalyses the reaction [[Fe-S] cluster scaffold protein carrying a second [4Fe-4S](2+) cluster] + N(6)-octanoyl-L-lysyl-[protein] + 2 oxidized [2Fe-2S]-[ferredoxin] + 2 S-adenosyl-L-methionine + 4 H(+) = [[Fe-S] cluster scaffold protein] + N(6)-[(R)-dihydrolipoyl]-L-lysyl-[protein] + 4 Fe(3+) + 2 hydrogen sulfide + 2 5'-deoxyadenosine + 2 L-methionine + 2 reduced [2Fe-2S]-[ferredoxin]. It functions in the pathway protein modification; protein lipoylation via endogenous pathway; protein N(6)-(lipoyl)lysine from octanoyl-[acyl-carrier-protein]: step 2/2. In terms of biological role, catalyzes the radical-mediated insertion of two sulfur atoms into the C-6 and C-8 positions of the octanoyl moiety bound to the lipoyl domains of lipoate-dependent enzymes, thereby converting the octanoylated domains into lipoylated derivatives. The chain is Lipoyl synthase 2 from Nostoc sp. (strain PCC 7120 / SAG 25.82 / UTEX 2576).